The following is a 362-amino-acid chain: Formyltransferase/hydrolase complex Fhc subunit B (362 aa).

In terms of assembly, octaheteromer. Part of the formyltransferase/hydrolase complex fhc; composed of FhcA, FhcB, FhcC and FhcD.

The protein resides in the cytoplasm. It functions in the pathway one-carbon metabolism; formaldehyde degradation; formate from formaldehyde (H(4)MPT route): step 4/5. Involved in the transformation of 5-formyl tetrahydromethanopterin (5-formyl-H(4)MPT) to methanofuran (MFR) and formate via the formylmethanofuran (formyl-MFR). The polypeptide is Formyltransferase/hydrolase complex Fhc subunit B (fhcB) (Methylorubrum extorquens (strain ATCC 14718 / DSM 1338 / JCM 2805 / NCIMB 9133 / AM1) (Methylobacterium extorquens)).